Consider the following 586-residue polypeptide: A-type ATP synthase subunit A (586 aa).

238 to 245 contributes to the ATP binding site; it reads GPFGSGKT.

This sequence belongs to the ATPase alpha/beta chains family. Has multiple subunits with at least A(3), B(3), C, D, E, F, H, I and proteolipid K(x).

It is found in the cell membrane. It carries out the reaction ATP + H2O + 4 H(+)(in) = ADP + phosphate + 5 H(+)(out). Functionally, component of the A-type ATP synthase that produces ATP from ADP in the presence of a proton gradient across the membrane. The A chain is the catalytic subunit. This Haloferax volcanii (strain ATCC 29605 / DSM 3757 / JCM 8879 / NBRC 14742 / NCIMB 2012 / VKM B-1768 / DS2) (Halobacterium volcanii) protein is A-type ATP synthase subunit A.